Reading from the N-terminus, the 98-residue chain is Integration host factor subunit alpha (98 aa).

The tract at residues 49 to 70 (FGNFDLRDKNQRPGRNPKTGED) is disordered.

The protein belongs to the bacterial histone-like protein family. Heterodimer of an alpha and a beta chain.

Its function is as follows. This protein is one of the two subunits of integration host factor, a specific DNA-binding protein that functions in genetic recombination as well as in transcriptional and translational control. The protein is Integration host factor subunit alpha of Sodalis glossinidius (strain morsitans).